Here is a 63-residue protein sequence, read N- to C-terminus: Period circadian protein (63 aa).

A disordered region spans residues 1–63; the sequence is EGSGGSGSSG…VTLTESLLNK (63 aa). Low complexity-rich tracts occupy residues 9–31 and 39–49; these read SGNF…NAGT and SAAASGASVNA. The segment covering 54–63 has biased composition (polar residues); that stretch reads VTLTESLLNK.

As to quaternary structure, forms a heterodimer with timeless (TIM); the complex then translocates into the nucleus. In terms of processing, phosphorylated with a circadian rhythmicity, probably by the double-time protein (dbt). Phosphorylation could be implicated in the stability of per monomer and in the formation of heterodimer per-tim.

The protein localises to the nucleus. The protein resides in the cytoplasm. It localises to the perinuclear region. In terms of biological role, essential for biological clock functions. Determines the period length of circadian and ultradian rhythms; an increase in PER dosage leads to shortened circadian rhythms and a decrease leads to lengthened circadian rhythms. Essential for the circadian rhythmicity of locomotor activity, eclosion behavior, and for the rhythmic component of the male courtship song that originates in the thoracic nervous system. The biological cycle depends on the rhythmic formation and nuclear localization of the TIM-PER complex. Light induces the degradation of TIM, which promotes elimination of PER. Nuclear activity of the heterodimer coordinatively regulates PER and TIM transcription through a negative feedback loop. Behaves as a negative element in circadian transcriptional loop. Does not appear to bind DNA, suggesting indirect transcriptional inhibition. This chain is Period circadian protein (per), found in Drosophila immigrans (Fruit fly).